We begin with the raw amino-acid sequence, 64 residues long: MAVQKSRVTPSRRGQRRSHDALAAKKLSIDPTSGEVHIRHHVTADGYYRGKKVIAIKASVVEED.

The tract at residues 1–23 (MAVQKSRVTPSRRGQRRSHDALA) is disordered.

It belongs to the bacterial ribosomal protein bL32 family.

This Xylella fastidiosa (strain M23) protein is Large ribosomal subunit protein bL32.